The primary structure comprises 831 residues: Vi polysaccharide biosynthesis protein TviD (831 aa).

Its pathway is glycan metabolism; Vi-antigen biosynthesis. It functions in the pathway capsule biogenesis; capsule polysaccharide biosynthesis. Its function is as follows. May be required for maturation of the Vi polysaccharide. The chain is Vi polysaccharide biosynthesis protein TviD (tviD) from Salmonella typhi.